A 272-amino-acid chain; its full sequence is Phosphatidylglycerol--prolipoprotein diacylglyceryl transferase (272 aa).

4 helical membrane passes run 24–44 (WYAL…RHLV), 64–84 (LLVY…VVFY), 99–119 (LWQG…GVML), and 125–145 (GLPT…GLFL). Arginine 147 serves as a coordination point for a 1,2-diacyl-sn-glycero-3-phospho-(1'-sn-glycerol). The next 3 membrane-spanning stretches (helical) occupy residues 185–205 (AAAE…LGAL), 209–229 (GLVT…CEFF), and 245–265 (MGML…AFAY).

It belongs to the Lgt family.

It is found in the cell inner membrane. It catalyses the reaction L-cysteinyl-[prolipoprotein] + a 1,2-diacyl-sn-glycero-3-phospho-(1'-sn-glycerol) = an S-1,2-diacyl-sn-glyceryl-L-cysteinyl-[prolipoprotein] + sn-glycerol 1-phosphate + H(+). Its pathway is protein modification; lipoprotein biosynthesis (diacylglyceryl transfer). Functionally, catalyzes the transfer of the diacylglyceryl group from phosphatidylglycerol to the sulfhydryl group of the N-terminal cysteine of a prolipoprotein, the first step in the formation of mature lipoproteins. The protein is Phosphatidylglycerol--prolipoprotein diacylglyceryl transferase of Methylocella silvestris (strain DSM 15510 / CIP 108128 / LMG 27833 / NCIMB 13906 / BL2).